Here is a 355-residue protein sequence, read N- to C-terminus: C-C chemokine receptor type 3 (355 aa).

Over 1–34 (MTTSLDTVETFGPTSYDDDMGLLCEKADVGALIA) the chain is Extracellular. A helical membrane pass occupies residues 35-62 (QFVPPLYSLVFMVGLLGNVVVVMILIKY). Topologically, residues 63–72 (RRLRIMTNIY) are cytoplasmic. A helical membrane pass occupies residues 73–93 (LLNLAISDLLFLFTLPFWIHY). Topologically, residues 94 to 107 (VRERNWVFSHGMCK) are extracellular. A disulfide bridge connects residues cysteine 106 and cysteine 183. A helical membrane pass occupies residues 108 to 129 (VLSGFYHTGLYSEIFFIILLTI). The Cytoplasmic segment spans residues 130–146 (DRYLAIVHAVFALRART). A helical membrane pass occupies residues 147-171 (VTFGVITSIVTWGLAVLAALPEFIF). Over 172 to 203 (YGTEKLFPKTLCSAIYPQDTVYSWRHFHTLKM) the chain is Extracellular. Residues 204–223 (TILCLALPLLVMAICYTGII) form a helical membrane-spanning segment. Residues 224–239 (KTLLRCPSKKKYKAIR) are Cytoplasmic-facing. The chain crosses the membrane as a helical span at residues 240-264 (LIFVIMAVFFIFWTPYNVAILISTY). Residues 265 to 281 (QSVLFGLDCERSKHLDL) are Extracellular-facing. The chain crosses the membrane as a helical span at residues 282 to 305 (FVLATEVIAYSHCCVNPVIYAFVG). Residues 306–355 (ERFRKYLRHFFHRHVLMHLGKYIPFLPSEKLERTSSVSPSTAEPELSIVF) are Cytoplasmic-facing.

It belongs to the G-protein coupled receptor 1 family.

The protein resides in the cell membrane. Receptor for C-C type chemokine. Binds and responds to a variety of chemokines, including CCL11, CCL26, CCL7, CCL13, RANTES(CCL5) and CCL15. Subsequently transduces a signal by increasing the intracellular calcium ions level. In addition acts as a possible functional receptor for NARS1. The polypeptide is C-C chemokine receptor type 3 (CCR3) (Macaca mulatta (Rhesus macaque)).